A 1155-amino-acid polypeptide reads, in one-letter code: ATP-dependent helicase/deoxyribonuclease subunit B (1155 aa).

The region spanning 1–278 (MSQLNAYIGR…FTKQERFENR (278 aa)) is the UvrD-like helicase ATP-binding domain. An ATP-binding site is contributed by 9 to 16 (GRAGTGKS). One can recognise a UvrD-like helicase C-terminal domain in the interval 270–584 (TKQERFENRD…SIGSMDLAKV (315 aa)). 4 residues coordinate [4Fe-4S] cluster: Cys785, Cys1112, Cys1115, and Cys1121.

Belongs to the helicase family. AddB/RexB type 1 subfamily. In terms of assembly, heterodimer of AddA and AddB. Mg(2+) serves as cofactor. It depends on [4Fe-4S] cluster as a cofactor.

The heterodimer acts as both an ATP-dependent DNA helicase and an ATP-dependent, dual-direction single-stranded exonuclease. Recognizes the chi site generating a DNA molecule suitable for the initiation of homologous recombination. The AddB subunit has 5' -&gt; 3' nuclease activity but not helicase activity. This is ATP-dependent helicase/deoxyribonuclease subunit B from Staphylococcus carnosus (strain TM300).